The following is a 125-amino-acid chain: Oxytocin-neurophysin 1 (125 aa).

A signal peptide spans 1-19 (MAGSSLACCLLGLLALTSA). C20 and C25 are joined by a disulfide. Glycine amide is present on G28. Intrachain disulfides connect C41/C85, C44/C58, C52/C75, C59/C65, C92/C104, C98/C116, and C105/C110.

Belongs to the vasopressin/oxytocin family. Interacts with oxytocin receptor (Ki=1.5 nM). Interacts with vasopressin V1aR/AVPR1A (Ki=37 nM), V1bR/AVPR1B (Ki=222 nM), and V2R/AVPR2 receptors (Ki=823 nM).

It is found in the secreted. Neurophysin 1 specifically binds oxytocin. Functionally, oxytocin causes contraction of the smooth muscle of the uterus and of the mammary gland. Acts by binding to oxytocin receptor (OXTR). The sequence is that of Oxytocin-neurophysin 1 (OXT) from Bos taurus (Bovine).